A 398-amino-acid polypeptide reads, in one-letter code: 4-hydroxy-3-methylbut-2-enyl diphosphate reductase (398 aa).

Cysteine 66 is a binding site for [4Fe-4S] cluster. A (2E)-4-hydroxy-3-methylbut-2-enyl diphosphate-binding site is contributed by histidine 96. Histidine 96 is a binding site for dimethylallyl diphosphate. Residue histidine 96 participates in isopentenyl diphosphate binding. Residue cysteine 157 coordinates [4Fe-4S] cluster. Histidine 185 is a (2E)-4-hydroxy-3-methylbut-2-enyl diphosphate binding site. A dimethylallyl diphosphate-binding site is contributed by histidine 185. Isopentenyl diphosphate is bound at residue histidine 185. Glutamate 187 (proton donor) is an active-site residue. Residue threonine 250 coordinates (2E)-4-hydroxy-3-methylbut-2-enyl diphosphate. Cysteine 288 provides a ligand contact to [4Fe-4S] cluster. The (2E)-4-hydroxy-3-methylbut-2-enyl diphosphate site is built by serine 317, serine 318, asparagine 319, and serine 379. Serine 317, serine 318, asparagine 319, and serine 379 together coordinate dimethylallyl diphosphate. Isopentenyl diphosphate contacts are provided by serine 317, serine 318, asparagine 319, and serine 379.

This sequence belongs to the IspH family. Requires [4Fe-4S] cluster as cofactor.

The enzyme catalyses isopentenyl diphosphate + 2 oxidized [2Fe-2S]-[ferredoxin] + H2O = (2E)-4-hydroxy-3-methylbut-2-enyl diphosphate + 2 reduced [2Fe-2S]-[ferredoxin] + 2 H(+). The catalysed reaction is dimethylallyl diphosphate + 2 oxidized [2Fe-2S]-[ferredoxin] + H2O = (2E)-4-hydroxy-3-methylbut-2-enyl diphosphate + 2 reduced [2Fe-2S]-[ferredoxin] + 2 H(+). It functions in the pathway isoprenoid biosynthesis; dimethylallyl diphosphate biosynthesis; dimethylallyl diphosphate from (2E)-4-hydroxy-3-methylbutenyl diphosphate: step 1/1. The protein operates within isoprenoid biosynthesis; isopentenyl diphosphate biosynthesis via DXP pathway; isopentenyl diphosphate from 1-deoxy-D-xylulose 5-phosphate: step 6/6. Catalyzes the conversion of 1-hydroxy-2-methyl-2-(E)-butenyl 4-diphosphate (HMBPP) into a mixture of isopentenyl diphosphate (IPP) and dimethylallyl diphosphate (DMAPP). Acts in the terminal step of the DOXP/MEP pathway for isoprenoid precursor biosynthesis. This chain is 4-hydroxy-3-methylbut-2-enyl diphosphate reductase, found in Prochlorococcus marinus (strain MIT 9313).